The sequence spans 335 residues: Glycerol-3-phosphate dehydrogenase [NAD(P)+] (335 aa).

The NADPH site is built by S15, Y16, H36, and K110. Sn-glycerol 3-phosphate is bound by residues K110, G139, and T141. A143 serves as a coordination point for NADPH. K195, D248, S258, R259, and N260 together coordinate sn-glycerol 3-phosphate. Residue K195 is the Proton acceptor of the active site. NADPH is bound at residue R259. The NADPH site is built by V283 and E285.

This sequence belongs to the NAD-dependent glycerol-3-phosphate dehydrogenase family.

It is found in the cytoplasm. It catalyses the reaction sn-glycerol 3-phosphate + NAD(+) = dihydroxyacetone phosphate + NADH + H(+). The enzyme catalyses sn-glycerol 3-phosphate + NADP(+) = dihydroxyacetone phosphate + NADPH + H(+). It participates in membrane lipid metabolism; glycerophospholipid metabolism. Functionally, catalyzes the reduction of the glycolytic intermediate dihydroxyacetone phosphate (DHAP) to sn-glycerol 3-phosphate (G3P), the key precursor for phospholipid synthesis. The chain is Glycerol-3-phosphate dehydrogenase [NAD(P)+] from Haemophilus influenzae (strain 86-028NP).